The primary structure comprises 338 residues: Histone acetyltransferase SAS2 (338 aa).

Polar residues predominate over residues 1-15 (MARSLSQSLTATTQK). The interval 1-31 (MARSLSQSLTATTQKLKGKKNGGKGKNKPSA) is disordered. Residues 16 to 31 (LKGKKNGGKGKNKPSA) show a composition bias toward basic residues. Residues 45-338 (LNERNIRQIQ…LKDEYLLIDD (294 aa)) enclose the MYST-type HAT domain. A C2HC MYST-type zinc finger spans residues 100-126 (LFVCEYCFKYTDDQTRFVGHVASCPFQ). N6-acetyllysine; by autocatalysis is present on Lys168. Acetyl-CoA contacts are provided by residues 209–211 (ILI) and 216–222 (QRRGLGL). The Proton donor/acceptor role is filled by Glu242. Residues Ser246 and Lys323 each contribute to the acetyl-CoA site.

Belongs to the MYST (SAS/MOZ) family. In terms of assembly, interacts with CAC1. Component of the SAS complex, at least composed of SAS2, SAS4 and SAS5. These three proteins constitute the core of the complex and are sufficient to acetylate histones. SAS4 is essential for HAT activity of the complex, while SAS5 is required for maxiaml HAT activity. Post-translationally, autoacetylation at Lys-168 is required for proper function.

Its subcellular location is the cytoplasm. It localises to the nucleus. It carries out the reaction L-lysyl-[protein] + acetyl-CoA = N(6)-acetyl-L-lysyl-[protein] + CoA + H(+). Histone acetyltransferase (HAT) subunit of the SAS complex, a multiprotein complex that acetylates 'Lys-16' of histone H4 and 'Lys-14' of histone H3. The SAS complex is however unable to acetylate nucleosomal histones. The complex is involved in transcriptional silencing at telomeres and at HML locus. Also involved in rDNA silencing and G0 control. The sequence is that of Histone acetyltransferase SAS2 (SAS2) from Saccharomyces cerevisiae (strain ATCC 204508 / S288c) (Baker's yeast).